Reading from the N-terminus, the 301-residue chain is Golgi to ER traffic protein 2 (301 aa).

Residues 1-167 (MSEPVVDTAE…LEYNTYNQKL (167 aa)) lie on the Cytoplasmic side of the membrane. Low complexity predominate over residues 42–55 (SQGSSVKTSGVKSV). Residues 42 to 93 (SQGSSVKTSGVKSVLDQEKEATSSHDDDPEIQDITEITTPPPRTPPIGEDAP) form a disordered region. The span at 56-67 (LDQEKEATSSHD) shows a compositional bias: basic and acidic residues. The helical transmembrane segment at 168–188 (WKFRFLLVRVLVTLFNFFYHY) threads the bilayer. Residues 189 to 214 (TSISDFHASNYAYVRDLSSEEYPVRD) are Lumenal-facing. Residues 215 to 234 (FFTWFATSEVVLVAAYYSVF) form a helical membrane-spanning segment. Residues 235–278 (HSLGLFHAANQNSIILKVMSMGSMILPQLESYKPLVARFLGYYE) lie on the Cytoplasmic side of the membrane. A helical membrane pass occupies residues 279-299 (LLGIVLGGLSLVIVLFGLLSF). At 300-301 (AN) the chain is on the lumenal side.

The protein belongs to the GET2 family. In terms of assembly, component of the Golgi to ER traffic (GET) complex, which is composed of GET1, GET2 and GET3. Within the complex, GET1 and GET2 form a heterotetramer which is stabilized by phosphatidylinositol binding and which binds to the GET3 homodimer.

Its subcellular location is the endoplasmic reticulum membrane. It is found in the golgi apparatus membrane. In terms of biological role, required for the post-translational delivery of tail-anchored (TA) proteins to the endoplasmic reticulum. Together with GET1, acts as a membrane receptor for soluble GET3, which recognizes and selectively binds the transmembrane domain of TA proteins in the cytosol. The GET complex cooperates with the HDEL receptor ERD2 to mediate the ATP-dependent retrieval of resident ER proteins that contain a C-terminal H-D-E-L retention signal from the Golgi to the ER. The polypeptide is Golgi to ER traffic protein 2 (Candida dubliniensis (strain CD36 / ATCC MYA-646 / CBS 7987 / NCPF 3949 / NRRL Y-17841) (Yeast)).